A 334-amino-acid polypeptide reads, in one-letter code: MIEADRIISASPKREEEVIDRAIRPKLLADYVGQPSVREQMEIFIKAAKLRDEALDHLLIFGPPGLGKTTLANIVANEMGVNIRTTSGPVLEKAGDLAAMLTNLEPYDVLFIDEIHRLSPAIEEVLYPAMEDYQLDIMIGEGPAARSIKLDLPPFTLVGATTRAGSLTSPLRDRFGIVQRLEFYSVDDLTSIVKRSADCLNLNLSPDGAYEVARRSRGTPRIANRLLRRVRDYADVRNNGVITSDIAKQALAMLDVDSEGFDFMDIKLLQAIVERFDGGPVGLDNLAAAIGEERDTIEDVLEPYLIQQGFLQRTPRGRIATSRTYAHLGIAKLD.

The tract at residues Ala4–Tyr184 is large ATPase domain (RuvB-L). ATP is bound by residues Ile23, Arg24, Gly65, Lys68, Thr69, Thr70, Glu131–Tyr133, Arg174, Tyr184, and Arg221. Thr69 contacts Mg(2+). Positions Ser185 to Asp255 are small ATPAse domain (RuvB-S). Residues Ser258–Asp334 are head domain (RuvB-H). DNA-binding residues include Arg294, Arg313, and Arg318.

Belongs to the RuvB family. As to quaternary structure, homohexamer. Forms an RuvA(8)-RuvB(12)-Holliday junction (HJ) complex. HJ DNA is sandwiched between 2 RuvA tetramers; dsDNA enters through RuvA and exits via RuvB. An RuvB hexamer assembles on each DNA strand where it exits the tetramer. Each RuvB hexamer is contacted by two RuvA subunits (via domain III) on 2 adjacent RuvB subunits; this complex drives branch migration. In the full resolvosome a probable DNA-RuvA(4)-RuvB(12)-RuvC(2) complex forms which resolves the HJ.

The protein resides in the cytoplasm. It carries out the reaction ATP + H2O = ADP + phosphate + H(+). Its function is as follows. The RuvA-RuvB-RuvC complex processes Holliday junction (HJ) DNA during genetic recombination and DNA repair, while the RuvA-RuvB complex plays an important role in the rescue of blocked DNA replication forks via replication fork reversal (RFR). RuvA specifically binds to HJ cruciform DNA, conferring on it an open structure. The RuvB hexamer acts as an ATP-dependent pump, pulling dsDNA into and through the RuvAB complex. RuvB forms 2 homohexamers on either side of HJ DNA bound by 1 or 2 RuvA tetramers; 4 subunits per hexamer contact DNA at a time. Coordinated motions by a converter formed by DNA-disengaged RuvB subunits stimulates ATP hydrolysis and nucleotide exchange. Immobilization of the converter enables RuvB to convert the ATP-contained energy into a lever motion, pulling 2 nucleotides of DNA out of the RuvA tetramer per ATP hydrolyzed, thus driving DNA branch migration. The RuvB motors rotate together with the DNA substrate, which together with the progressing nucleotide cycle form the mechanistic basis for DNA recombination by continuous HJ branch migration. Branch migration allows RuvC to scan DNA until it finds its consensus sequence, where it cleaves and resolves cruciform DNA. The protein is Holliday junction branch migration complex subunit RuvB of Actinobacillus pleuropneumoniae serotype 5b (strain L20).